The sequence spans 345 residues: Leucine-rich repeat and transmembrane domain-containing protein 1 (345 aa).

An N-terminal signal peptide occupies residues 1-27 (MKGELLLFSSVIVLLQVVCSCPDKCYC). Residues 28-50 (QSSTNFVDCSQQGLAEIPSHLPP) enclose the LRRNT domain. The Extracellular portion of the chain corresponds to 28–288 (QSSTNFVDCS…PANLRHAIAT (261 aa)). LRR repeat units lie at residues 51–72 (QTRT…AFRS), 75–96 (WLMT…AFHG), 99–120 (HLQV…LFHS), 123–144 (QLRE…LGET), and 147–168 (NLTI…LLES). The N-linked (GlcNAc...) asparagine glycan is linked to Asn104. A glycan (N-linked (GlcNAc...) asparagine) is linked at Asn147. The 55-residue stretch at 180–234 (NLWKCNCHLLGLKLWLEKFVYKGGLTDGIICESPDTWKGKDLLRIPHELYQPCPL) folds into the LRRCT domain. Residues 289 to 309 (VIITGVVCGIVCLMMLAAAIY) traverse the membrane as a helical segment. Over 310-345 (GCTYAAITAQYHGGPLAQTNDPGKVEEKERFDSSPA) the chain is Cytoplasmic. The tract at residues 326 to 345 (AQTNDPGKVEEKERFDSSPA) is disordered. Residues 332-345 (GKVEEKERFDSSPA) show a composition bias toward basic and acidic residues.

Its subcellular location is the membrane. In Homo sapiens (Human), this protein is Leucine-rich repeat and transmembrane domain-containing protein 1 (LRTM1).